Reading from the N-terminus, the 396-residue chain is MRVNDSPSDEVYQTRLQGAQTAMKRAGIDVLALSGPDFHNYFAGLWGLPVGRPVWFVLQQYGKPAFVAPRSEAREISARCKTPVAVEWVEWEGPIAAPMTNQDALAQYTRGIAPNPGLIGLDFNCTSGANVELVRQALGAEHIKDVTPMLQELWACKDAAGIAAIRQSCDIVREQFLACRNAIAPGIPEWKVTLASVTAAIERNGELLAEDEELPRFWPHQLNMVGSGADRTARCHPSGGGRIMQDGAIAQICLCGQTFRGHAACFDRPVPIGSKPLPANLRKVIDVAREAQSAALAALRPGVTAGEIHAAAVAVIKRSGWEAPFLHRTGRGIGYSDWDGIELKAGSQTVLEVGNVLSIEPGVYVQGIGGARFGDTVLVSETGYEVLTPFDLGRNI.

It belongs to the peptidase M24B family.

The sequence is that of Agropine synthesis cyclase (ags) from Rhizobium rhizogenes (Agrobacterium rhizogenes).